The following is a 172-amino-acid chain: Large ribosomal subunit protein bL21m (172 aa).

The transit peptide at 1-20 (MIRNIGSNLMKSSSSILLRN) directs the protein to the mitochondrion.

Belongs to the bacterial ribosomal protein bL21 family.

The protein resides in the mitochondrion. The polypeptide is Large ribosomal subunit protein bL21m (mrpl21) (Dictyostelium discoideum (Social amoeba)).